The sequence spans 635 residues: Protein phosphatase PP2A regulatory subunit A (635 aa).

Over residues Met-1 to Ser-27 the composition is skewed to low complexity. The tract at residues Met-1 to Asn-33 is disordered. HEAT repeat units lie at residues Glu-34 to Arg-72, Thr-73 to Gln-111, Tyr-112 to Gln-150, Leu-151 to Ser-189, Leu-190 to Leu-228, Gly-229 to Gly-273, Asp-274 to Ala-316, Tyr-317 to Ile-356, Ile-357 to Gln-395, Val-396 to Leu-434, Leu-435 to Phe-473, Phe-474 to Trp-512, Cys-513 to Val-553, Val-554 to Leu-598, and Ile-599 to Leu-632.

This sequence belongs to the phosphatase 2A regulatory subunit A family. PP2A exists in several trimeric forms, all of which consist of a core composed of a catalytic subunit associated with a 65 kDa regulatory subunit (PR65) (subunit A). The core complex associates with a third, variable subunit (subunit B), which confers distinct properties to the holoenzyme.

Functionally, phosphatase 2A affects a variety of biological processes in the cell such as transcription, cell cycle progression and cellular morphogenesis, and provides an initial identification of critical substrates for this phosphatase. The regulatory subunit may direct the catalytic subunit to distinct, albeit overlapping, subsets of substrates. In Saccharomyces cerevisiae (strain ATCC 204508 / S288c) (Baker's yeast), this protein is Protein phosphatase PP2A regulatory subunit A (TPD3).